A 274-amino-acid chain; its full sequence is Rhamnulose-1-phosphate aldolase (274 aa).

Residue glutamate 117 is part of the active site. Residues histidine 141, histidine 143, and histidine 212 each contribute to the Zn(2+) site.

This sequence belongs to the aldolase class II family. RhaD subfamily. In terms of assembly, homotetramer. Zn(2+) serves as cofactor.

The protein localises to the cytoplasm. The enzyme catalyses L-rhamnulose 1-phosphate = (S)-lactaldehyde + dihydroxyacetone phosphate. It participates in carbohydrate degradation; L-rhamnose degradation; glycerone phosphate from L-rhamnose: step 3/3. Catalyzes the reversible cleavage of L-rhamnulose-1-phosphate to dihydroxyacetone phosphate (DHAP) and L-lactaldehyde. In Escherichia coli O127:H6 (strain E2348/69 / EPEC), this protein is Rhamnulose-1-phosphate aldolase.